The sequence spans 78 residues: Protein SlyX homolog (78 aa).

The protein belongs to the SlyX family.

The sequence is that of Protein SlyX homolog from Xanthomonas oryzae pv. oryzae (strain MAFF 311018).